Reading from the N-terminus, the 570-residue chain is Periplasmic trehalase (570 aa).

Positions 1-34 (MIPPEIRRSVLLQKAIKLALAGTLLTFASFSATA) are cleaved as a signal peptide. Residues arginine 159, 166–167 (WD), asparagine 203, 212–214 (RSQ), 284–286 (RPE), and glycine 317 contribute to the substrate site. Residues aspartate 319 and glutamate 503 each act as proton donor/acceptor in the active site. A substrate-binding site is contributed by glutamate 518. The interval 544–570 (KPCDSVPSTRPASLSATPTKTPSAATQ) is disordered. The segment covering 554 to 570 (PASLSATPTKTPSAATQ) has biased composition (low complexity).

Belongs to the glycosyl hydrolase 37 family. In terms of assembly, monomer.

It is found in the periplasm. The catalysed reaction is alpha,alpha-trehalose + H2O = alpha-D-glucose + beta-D-glucose. In terms of biological role, provides the cells with the ability to utilize trehalose at high osmolarity by splitting it into glucose molecules that can subsequently be taken up by the phosphotransferase-mediated uptake system. This chain is Periplasmic trehalase, found in Salmonella typhimurium (strain LT2 / SGSC1412 / ATCC 700720).